We begin with the raw amino-acid sequence, 505 residues long: Lysine--tRNA ligase (505 aa).

Mg(2+) is bound by residues glutamate 415 and glutamate 422.

Belongs to the class-II aminoacyl-tRNA synthetase family. In terms of assembly, homodimer. It depends on Mg(2+) as a cofactor.

It localises to the cytoplasm. It catalyses the reaction tRNA(Lys) + L-lysine + ATP = L-lysyl-tRNA(Lys) + AMP + diphosphate. The polypeptide is Lysine--tRNA ligase (Salmonella arizonae (strain ATCC BAA-731 / CDC346-86 / RSK2980)).